The following is a 205-amino-acid chain: Holliday junction branch migration complex subunit RuvA (205 aa).

Positions 1–64 (MIGRIRGLLI…EDAQLLYGFI (64 aa)) are domain I. A domain II region spans residues 65–143 (SKQERSLFRL…SLMEASVGSE (79 aa)). The segment at 144 to 156 (REFMLQSNYTAPE) is flexible linker. The domain III stretch occupies residues 157–205 (AVNTAEEDAIAALLSLGYKPAQASKAVSSVYTDGMSSETLIKSALKSML).

It belongs to the RuvA family. As to quaternary structure, homotetramer. Forms an RuvA(8)-RuvB(12)-Holliday junction (HJ) complex. HJ DNA is sandwiched between 2 RuvA tetramers; dsDNA enters through RuvA and exits via RuvB. An RuvB hexamer assembles on each DNA strand where it exits the tetramer. Each RuvB hexamer is contacted by two RuvA subunits (via domain III) on 2 adjacent RuvB subunits; this complex drives branch migration. In the full resolvosome a probable DNA-RuvA(4)-RuvB(12)-RuvC(2) complex forms which resolves the HJ.

The protein localises to the cytoplasm. The RuvA-RuvB-RuvC complex processes Holliday junction (HJ) DNA during genetic recombination and DNA repair, while the RuvA-RuvB complex plays an important role in the rescue of blocked DNA replication forks via replication fork reversal (RFR). RuvA specifically binds to HJ cruciform DNA, conferring on it an open structure. The RuvB hexamer acts as an ATP-dependent pump, pulling dsDNA into and through the RuvAB complex. HJ branch migration allows RuvC to scan DNA until it finds its consensus sequence, where it cleaves and resolves the cruciform DNA. The polypeptide is Holliday junction branch migration complex subunit RuvA (Shewanella halifaxensis (strain HAW-EB4)).